The sequence spans 545 residues: Chaperonin GroEL (545 aa).

ATP contacts are provided by residues 30-33 (TLGP), K51, 87-91 (DGTTT), G415, 479-481 (NAA), and D495.

The protein belongs to the chaperonin (HSP60) family. As to quaternary structure, forms a cylinder of 14 subunits composed of two heptameric rings stacked back-to-back. Interacts with the co-chaperonin GroES.

It is found in the cytoplasm. The enzyme catalyses ATP + H2O + a folded polypeptide = ADP + phosphate + an unfolded polypeptide.. Functionally, together with its co-chaperonin GroES, plays an essential role in assisting protein folding. The GroEL-GroES system forms a nano-cage that allows encapsulation of the non-native substrate proteins and provides a physical environment optimized to promote and accelerate protein folding. This is Chaperonin GroEL from Tolumonas auensis (strain DSM 9187 / NBRC 110442 / TA 4).